A 448-amino-acid chain; its full sequence is Putative F-box/LRR-repeat protein At3g44810 (448 aa).

Residues 6-54 (TASLNCLPDELLVHVLSSLETKQAASTSVLSKRWRTLFAVRRNLDFDDS) enclose the F-box domain. 6 LRR repeats span residues 117–141 (VSEL…VFRS), 143–165 (TLVK…TCLP), 190–213 (CPAL…VSSK), 228–251 (FDWF…TYAR), 290–313 (VRNV…CKGG), and 421–443 (IVDS…SSRL).

The polypeptide is Putative F-box/LRR-repeat protein At3g44810 (Arabidopsis thaliana (Mouse-ear cress)).